A 65-amino-acid chain; its full sequence is Large ribosomal subunit protein bL35 (65 aa).

The disordered stretch occupies residues 1–26; sequence MPKIKTVRGAAKRFKKTASGGFKRKQ. Basic residues predominate over residues 10–26; that stretch reads AAKRFKKTASGGFKRKQ.

This sequence belongs to the bacterial ribosomal protein bL35 family.

This chain is Large ribosomal subunit protein bL35, found in Actinobacillus succinogenes (strain ATCC 55618 / DSM 22257 / CCUG 43843 / 130Z).